We begin with the raw amino-acid sequence, 579 residues long: V-type ATP synthase alpha chain (579 aa).

227 to 234 (GGFGTGKT) provides a ligand contact to ATP.

It belongs to the ATPase alpha/beta chains family.

It carries out the reaction ATP + H2O + 4 H(+)(in) = ADP + phosphate + 5 H(+)(out). Produces ATP from ADP in the presence of a proton gradient across the membrane. The V-type alpha chain is a catalytic subunit. In Anaeromyxobacter dehalogenans (strain 2CP-C), this protein is V-type ATP synthase alpha chain.